We begin with the raw amino-acid sequence, 516 residues long: Signal recognition particle protein (516 aa).

Residues 108–115 (GLQGAGKT), 191–195 (DTAGR), and 249–252 (TKID) each bind GTP. The tract at residues 383–405 (MTPEERENPDLLTPSRRRRIASG) is disordered.

This sequence belongs to the GTP-binding SRP family. SRP54 subfamily. As to quaternary structure, part of the signal recognition particle protein translocation system, which is composed of SRP and FtsY.

The protein resides in the cytoplasm. It catalyses the reaction GTP + H2O = GDP + phosphate + H(+). Its function is as follows. Involved in targeting and insertion of nascent membrane proteins into the cytoplasmic membrane. Binds to the hydrophobic signal sequence of the ribosome-nascent chain (RNC) as it emerges from the ribosomes. The SRP-RNC complex is then targeted to the cytoplasmic membrane where it interacts with the SRP receptor FtsY. In Streptococcus mutans serotype c (strain ATCC 700610 / UA159), this protein is Signal recognition particle protein.